The following is a 318-amino-acid chain: COP9 signalosome complex subunit 6 (318 aa).

The 134-residue stretch at 32 to 165 folds into the MPN domain; the sequence is VALHPLVILN…VSVYESVIDI (134 aa).

The protein belongs to the peptidase M67A family. CSN6 subfamily. In terms of assembly, component of the CSN complex, probably composed of cops1, cops2, cops3, cops4, cops5, cops6, cops7, cops8 and cops9.

It is found in the cytoplasm. The protein localises to the nucleus. Its function is as follows. Component of the COP9 signalosome complex (CSN), a complex involved in various cellular and developmental processes. The CSN complex is an essential regulator of the ubiquitin (Ubl) conjugation pathway by mediating the deneddylation of the cullin subunits of E3 ligase complexes, leading to modify the Ubl ligase activity. This chain is COP9 signalosome complex subunit 6 (cops6), found in Xenopus laevis (African clawed frog).